Here is a 321-residue protein sequence, read N- to C-terminus: Flagellin C (321 aa).

It belongs to the bacterial flagellin family.

The protein resides in the secreted. It is found in the bacterial flagellum. Its function is as follows. Flagellin is the subunit protein which polymerizes to form the filaments of bacterial flagella. The sequence is that of Flagellin C (flaC) from Rhizobium meliloti (strain 1021) (Ensifer meliloti).